We begin with the raw amino-acid sequence, 236 residues long: Penton protein H240R (236 aa).

The protein belongs to the asfivirus H240R family.

The protein resides in the virion. Functionally, forms the penton at the fivefold vertices of the icosahedral capsid. Together with the minor capsid proteins (p17, p49, and M1249L), forms a complicated network immediately below the outer capsid shell, stabilizing the whole capsid. This African swine fever virus (isolate Pig/Kenya/KEN-50/1950) (ASFV) protein is Penton protein H240R.